A 354-amino-acid polypeptide reads, in one-letter code: tRNA N6-adenosine threonylcarbamoyltransferase (354 aa).

His-115 and His-119 together coordinate Fe cation. Residues 138 to 142 (LVSGG), Asp-171, Gly-184, and Asn-276 contribute to the substrate site. Asp-304 serves as a coordination point for Fe cation.

Belongs to the KAE1 / TsaD family. Fe(2+) serves as cofactor.

Its subcellular location is the cytoplasm. The catalysed reaction is L-threonylcarbamoyladenylate + adenosine(37) in tRNA = N(6)-L-threonylcarbamoyladenosine(37) in tRNA + AMP + H(+). Required for the formation of a threonylcarbamoyl group on adenosine at position 37 (t(6)A37) in tRNAs that read codons beginning with adenine. Is involved in the transfer of the threonylcarbamoyl moiety of threonylcarbamoyl-AMP (TC-AMP) to the N6 group of A37, together with TsaE and TsaB. TsaD likely plays a direct catalytic role in this reaction. This Xanthomonas campestris pv. campestris (strain 8004) protein is tRNA N6-adenosine threonylcarbamoyltransferase.